A 336-amino-acid chain; its full sequence is Homoserine dehydrogenase (336 aa).

NADPH is bound at residue phenylalanine 8. NAD(+)-binding residues include alanine 10, isoleucine 11, and threonine 94. The NADPH site is built by isoleucine 11, threonine 94, and lysine 123. Residues isoleucine 11, threonine 94, and lysine 123 each coordinate NADP(+). The Na(+) site is built by glutamate 147, valine 150, and glycine 152. 2 residues coordinate NADP(+): glycine 205 and glutamate 208. Glutamate 208 and aspartate 219 together coordinate L-homoserine. The active-site Proton donor is lysine 223. An NADPH-binding site is contributed by glycine 315. Glycine 315 provides a ligand contact to NAD(+). Glycine 315 contacts NADP(+).

Belongs to the homoserine dehydrogenase family. A metal cation serves as cofactor.

It carries out the reaction L-homoserine + NADP(+) = L-aspartate 4-semialdehyde + NADPH + H(+). It catalyses the reaction L-homoserine + NAD(+) = L-aspartate 4-semialdehyde + NADH + H(+). It participates in amino-acid biosynthesis; L-methionine biosynthesis via de novo pathway; L-homoserine from L-aspartate: step 3/3. The protein operates within amino-acid biosynthesis; L-threonine biosynthesis; L-threonine from L-aspartate: step 3/5. In terms of biological role, catalyzes the conversion of L-aspartate-beta-semialdehyde (L-Asa) to L-homoserine (L-Hse), the third step in the biosynthesis of threonine and methionine from aspartate. The chain is Homoserine dehydrogenase (hom) from Methanocaldococcus jannaschii (strain ATCC 43067 / DSM 2661 / JAL-1 / JCM 10045 / NBRC 100440) (Methanococcus jannaschii).